Reading from the N-terminus, the 318-residue chain is Ferredoxin--NADP reductase (318 aa).

Positions 33, 41, 46, 84, 115, 276, and 316 each coordinate FAD.

This sequence belongs to the ferredoxin--NADP reductase type 2 family. In terms of assembly, homodimer. It depends on FAD as a cofactor.

The catalysed reaction is 2 reduced [2Fe-2S]-[ferredoxin] + NADP(+) + H(+) = 2 oxidized [2Fe-2S]-[ferredoxin] + NADPH. This is Ferredoxin--NADP reductase from Lactobacillus gasseri (strain ATCC 33323 / DSM 20243 / BCRC 14619 / CIP 102991 / JCM 1131 / KCTC 3163 / NCIMB 11718 / NCTC 13722 / AM63).